Reading from the N-terminus, the 625-residue chain is Clathrin interactor 1 (625 aa).

An ENTH domain is found at 16-149 (NVVMNYSEIE…QDDDRLREER (134 aa)). Arginine 29 provides a ligand contact to a 1,2-diacyl-sn-glycero-3-phospho-(1D-myo-inositol-4,5-bisphosphate). The segment at 52–54 (FMY) is interaction with VTI1B. Arginine 67 lines the a 1,2-diacyl-sn-glycero-3-phospho-(1D-myo-inositol-4,5-bisphosphate) pocket. 2 interaction with VTI1B regions span residues 94–96 (SER) and 142–153 (DDRLREERKKAK). Phosphoserine is present on residues serine 163, serine 166, serine 173, serine 205, serine 210, serine 227, serine 245, and serine 299. Positions 219-331 (FRRKDREDSP…SSGDLVDLFD (113 aa)) are disordered. Basic and acidic residues predominate over residues 222 to 239 (KDREDSPERCSDSDEEKK). Residue threonine 308 is modified to Phosphothreonine. Residues 308–323 (TPQSSVKTSVPSSKSS) are compositionally biased toward low complexity. The residue at position 312 (serine 312) is a Phosphoserine. Residues 340–352 (SADLFGGFADFGS) are interaction with AP1G1, AP1G2 and GGA2. The interval 368 to 380 (GNGDFGDWSAFNQ) is interaction with AP1G1 and AP1G2. At serine 624 the chain carries Phosphoserine.

This sequence belongs to the epsin family. In terms of assembly, binds clathrin heavy chain and AP-2. Interacts with VTI1B. Interacts with GGA2 (via GAE domain). Interacts with AP1G1 (via GAE domain). Interacts with AP1G2 (via GAE domain). As to expression, ubiquitously expressed at low to intermediate levels.

It is found in the cytoplasm. The protein resides in the perinuclear region. Its subcellular location is the membrane. The protein localises to the cytoplasmic vesicle. It localises to the clathrin-coated vesicle. Functionally, binds to membranes enriched in phosphatidylinositol 4,5-bisphosphate (PtdIns(4,5)P2). May have a role in transport via clathrin-coated vesicles from the trans-Golgi network to endosomes. Stimulates clathrin assembly. This chain is Clathrin interactor 1 (CLINT1), found in Homo sapiens (Human).